A 289-amino-acid polypeptide reads, in one-letter code: Urease accessory protein UreD (289 aa).

The protein belongs to the UreD family. As to quaternary structure, ureD, UreF and UreG form a complex that acts as a GTP-hydrolysis-dependent molecular chaperone, activating the urease apoprotein by helping to assemble the nickel containing metallocenter of UreC. The UreE protein probably delivers the nickel.

It is found in the cytoplasm. In terms of biological role, required for maturation of urease via the functional incorporation of the urease nickel metallocenter. In Xanthobacter autotrophicus (strain ATCC BAA-1158 / Py2), this protein is Urease accessory protein UreD.